A 562-amino-acid polypeptide reads, in one-letter code: Solute carrier family 40 member 1 (562 aa).

Topologically, residues 1-20 (MDSPASKKPRCERFREFFKS) are cytoplasmic. A helical membrane pass occupies residues 21-50 (AKFLIYVGHALSTWGDRMWNFAVAVFLVEL). Residue Asp36 coordinates Fe cation. Over 51–54 (YGNS) the chain is Extracellular. Residues 55–81 (LLLTAVYGLVVAGSVLLLGAIIGDWVD) traverse the membrane as a helical segment. At 82 to 84 (KNP) the chain is on the cytoplasmic side. The chain crosses the membrane as a helical span at residues 85–115 (RLKVAQTSLVVQNSAVILCGALLMAVFQFKQ). The Extracellular segment spans residues 116-123 (QLSSMYDG). The helical transmembrane segment at 124 to 159 (WLLTTCYIMVISIANIANLASTAMSITIQRDWVVVV) threads the bilayer. At 160-161 (AG) the chain is on the cytoplasmic side. The helical transmembrane segment at 162 to 192 (DDRSKLADMNATVRIIDQLTNILAPMLVGQI) threads the bilayer. Over 193–199 (MAFGSHF) the chain is Extracellular. The helical transmembrane segment at 200-226 (IGCGFISGWNLFSMCLEYFLLWKVYQK) threads the bilayer. The Cytoplasmic segment spans residues 227–300 (TPALAFKAGQ…DGWVAYYNQS (74 aa)). Residues 301-327 (IFFAGMSLAFLYMTVLGFDCITTGYAY) form a helical membrane-spanning segment. Cys320 contacts Fe cation. Over 328-332 (TQGLN) the chain is Extracellular. The helical transmembrane segment at 333–360 (GSVLSLLMGASAVSGICGTVAFTWIRKK) threads the bilayer. The Cytoplasmic portion of the chain corresponds to 361–362 (CG). The chain crosses the membrane as a helical span at residues 363-385 (LIRTGFIAGVTQLSCLTLCVASV). Residues 386–444 (FAPGSPFDLSVSPFEEVLRHLFGDSGSLRESPTFIPTTEPPIQANVTVFEEAPPVESYM) are Extracellular-facing. A helical transmembrane segment spans residues 445 to 474 (SVGLLFAGVIAARVGLWSFDLTVTQLIQEN). The Cytoplasmic segment spans residues 475-479 (VIESE). A helical transmembrane segment spans residues 480–504 (RGVINGVQNSMNYLLDLLHFIMVIL). A Fe cation-binding site is contributed by His498. The Extracellular portion of the chain corresponds to 505 to 507 (APN). Residues 508–533 (PEAFGLLVIISVSFVAMGHMMYFRFA) form a helical membrane-spanning segment. Residues 534–562 (YKSLGSRLFLFCSPEQKPDPNIPSLPNSV) lie on the Cytoplasmic side of the membrane.

This sequence belongs to the ferroportin (FP) (TC 2.A.100) family. SLC40A subfamily. As to expression, expressed in the yolk sac and placenta.

It is found in the cell membrane. The protein resides in the basolateral cell membrane. It catalyses the reaction Fe(2+)(in) = Fe(2+)(out). In terms of biological role, transports Fe(2+) from the inside of a cell to the outside of the cell, playing a key role for maintaining systemic iron homeostasis. May be involved in transfer of Fe(2+) between maternal and fetal circulation. The polypeptide is Solute carrier family 40 member 1 (slc40a1) (Danio rerio (Zebrafish)).